We begin with the raw amino-acid sequence, 570 residues long: L-ascorbate oxidase (570 aa).

The N-terminal stretch at 1 to 18 (MGMWWIVAVAILAHTASA) is a signal peptide. 2 consecutive Plastocyanin-like domains span residues 33-140 (WPDC…IIDV) and 154-317 (FNLL…LNYV). Disulfide bonds link Cys-36-Cys-219, Cys-98-Cys-557, and Cys-197-Cys-211. Positions 77 and 79 each coordinate Cu cation. Asn-109 is a glycosylation site (N-linked (GlcNAc...) asparagine). Cu cation is bound by residues His-121 and His-123. A glycan (N-linked (GlcNAc...) asparagine) is linked at Asn-196. Residues Asn-229, Asn-343, Asn-384, Asn-407, Asn-434, Asn-442, and Asn-458 are each glycosylated (N-linked (GlcNAc...) asparagine). In terms of domain architecture, Plastocyanin-like 3 spans 426-543 (RNRNAKQGNV…MGMGVVFAEG (118 aa)). His-463, His-466, His-468, His-525, Cys-526, His-527, His-531, and Met-536 together coordinate Cu cation.

Belongs to the multicopper oxidase family. Dimer. Cu cation serves as cofactor.

The protein resides in the secreted. The catalysed reaction is 4 L-ascorbate + O2 = 4 monodehydro-L-ascorbate radical + 2 H2O. It functions in the pathway cofactor degradation; L-ascorbate degradation. Functionally, ascorbate oxidase involved in a redox system involving ascorbic acid (AsA). The oxidation of AsA represses responses to high salinity and oxidative stress conditions such as vegetative growth and seed production reductions. Negative regulator of defense responses toward incompatible Turnip mosaic virus (TuMV strain UK1) by preventing jasmonic acid (JA)- dependent accumulation of ascorbic acid (AsA, AS) and dehydroascobic acid (DHA). The polypeptide is L-ascorbate oxidase (Brassica rapa subsp. pekinensis (Chinese cabbage)).